The primary structure comprises 158 residues: NAD(P)H-quinone oxidoreductase subunit J, chloroplastic (158 aa).

The protein belongs to the complex I 30 kDa subunit family. As to quaternary structure, NDH is composed of at least 16 different subunits, 5 of which are encoded in the nucleus.

The protein localises to the plastid. It is found in the chloroplast thylakoid membrane. The enzyme catalyses a plastoquinone + NADH + (n+1) H(+)(in) = a plastoquinol + NAD(+) + n H(+)(out). It catalyses the reaction a plastoquinone + NADPH + (n+1) H(+)(in) = a plastoquinol + NADP(+) + n H(+)(out). Functionally, NDH shuttles electrons from NAD(P)H:plastoquinone, via FMN and iron-sulfur (Fe-S) centers, to quinones in the photosynthetic chain and possibly in a chloroplast respiratory chain. The immediate electron acceptor for the enzyme in this species is believed to be plastoquinone. Couples the redox reaction to proton translocation, and thus conserves the redox energy in a proton gradient. The protein is NAD(P)H-quinone oxidoreductase subunit J, chloroplastic of Draba nemorosa (Woodland whitlowgrass).